A 441-amino-acid polypeptide reads, in one-letter code: 3-phosphoshikimate 1-carboxyvinyltransferase (441 aa).

3-phosphoshikimate contacts are provided by K25, S26, and R30. K25 contributes to the phosphoenolpyruvate binding site. Phosphoenolpyruvate-binding residues include G97 and R125. S169, Q170, D311, and K338 together coordinate 3-phosphoshikimate. Q170 contributes to the phosphoenolpyruvate binding site. Residue D311 is the Proton acceptor of the active site. Phosphoenolpyruvate contacts are provided by R342, R383, and K410.

The protein belongs to the EPSP synthase family. Monomer.

It is found in the cytoplasm. It carries out the reaction 3-phosphoshikimate + phosphoenolpyruvate = 5-O-(1-carboxyvinyl)-3-phosphoshikimate + phosphate. It participates in metabolic intermediate biosynthesis; chorismate biosynthesis; chorismate from D-erythrose 4-phosphate and phosphoenolpyruvate: step 6/7. Catalyzes the transfer of the enolpyruvyl moiety of phosphoenolpyruvate (PEP) to the 5-hydroxyl of shikimate-3-phosphate (S3P) to produce enolpyruvyl shikimate-3-phosphate and inorganic phosphate. The polypeptide is 3-phosphoshikimate 1-carboxyvinyltransferase (Chlamydia muridarum (strain MoPn / Nigg)).